Here is a 196-residue protein sequence, read N- to C-terminus: Cyclin-dependent kinase inhibitor 6 (196 aa).

Disordered regions lie at residues 1–36 and 55–151; these read MSERKRELAEEASSTSFSPLKKTKLNDSSDSSPDSH and ASDE…RKTP. Residues 124 to 139 show a composition bias toward low complexity; the sequence is SEGLGETTTEMESSSA. Position 152 is a phosphothreonine; by KIN10 (Thr-152).

This sequence belongs to the CDI family. ICK/KRP subfamily. Specifically interacts with CDKA-1, but not with CDKB1-1. Interacts with CYCD1-1, CYCD4-1 and RHF1A. Binds to FBL17. Interacts with KIN10. Interacts with CYCD3-1. In terms of processing, ubiquitinated by RHF1A and SCF(FBL17). Ubiquitination leads to its subsequent degradation, thus controlling cell cycle progression. Post-translationally, the phosphorylation at Thr-152 by KIN10 represses its activity. In terms of tissue distribution, expressed in newly formed organs such as the shoot apex. Expressed in cotyledon, primary root and marginal region of the leaves as well as in developing pollen.

The protein resides in the nucleus. It is found in the nucleoplasm. With respect to regulation, down-regulated by KIN10 under a phosphorylation-dependent manner. Functionally, binds and inhibits CYCD2-1/CDKA-1 complex kinase activity. Regulates cell division which is crucial for plant growth, development and morphogenesis. May inhibit CDK kinases specifically involved in the G1/S phase transition. The chain is Cyclin-dependent kinase inhibitor 6 (KRP6) from Arabidopsis thaliana (Mouse-ear cress).